A 253-amino-acid polypeptide reads, in one-letter code: Phosphoadenosine 5'-phosphosulfate reductase (253 aa).

Cys239 serves as the catalytic Nucleophile; cysteine thiosulfonate intermediate.

This sequence belongs to the PAPS reductase family. CysH subfamily.

It localises to the cytoplasm. The enzyme catalyses [thioredoxin]-disulfide + sulfite + adenosine 3',5'-bisphosphate + 2 H(+) = [thioredoxin]-dithiol + 3'-phosphoadenylyl sulfate. The protein operates within sulfur metabolism; hydrogen sulfide biosynthesis; sulfite from sulfate: step 3/3. In terms of biological role, catalyzes the formation of sulfite from phosphoadenosine 5'-phosphosulfate (PAPS) using thioredoxin as an electron donor. This is Phosphoadenosine 5'-phosphosulfate reductase from Aliivibrio fischeri (strain MJ11) (Vibrio fischeri).